Consider the following 646-residue polypeptide: Acetyl-coenzyme A synthetase (646 aa).

CoA-binding positions include 190-193 and Thr-309; that span reads RAGN. ATP is bound by residues 385–387, 409–414, Asp-498, and Arg-513; these read GEP and DTWWQT. Ser-521 serves as a coordination point for CoA. Arg-524 contributes to the ATP binding site. 3 residues coordinate Mg(2+): Val-535, His-537, and Val-540. Arg-582 serves as a coordination point for CoA. The residue at position 607 (Lys-607) is an N6-acetyllysine.

Belongs to the ATP-dependent AMP-binding enzyme family. Mg(2+) serves as cofactor. Post-translationally, acetylated. Deacetylation by the SIR2-homolog deacetylase activates the enzyme.

It catalyses the reaction acetate + ATP + CoA = acetyl-CoA + AMP + diphosphate. Catalyzes the conversion of acetate into acetyl-CoA (AcCoA), an essential intermediate at the junction of anabolic and catabolic pathways. AcsA undergoes a two-step reaction. In the first half reaction, AcsA combines acetate with ATP to form acetyl-adenylate (AcAMP) intermediate. In the second half reaction, it can then transfer the acetyl group from AcAMP to the sulfhydryl group of CoA, forming the product AcCoA. This is Acetyl-coenzyme A synthetase from Pseudoalteromonas translucida (strain TAC 125).